The primary structure comprises 38 residues: Photosystem II reaction center protein X (38 aa).

The chain crosses the membrane as a helical span at residues 9 to 29 (ISSLTAGGLVVLTIAVALIVI).

It belongs to the PsbX family. Type 1 subfamily. In terms of assembly, PSII is composed of 1 copy each of membrane proteins PsbA, PsbB, PsbC, PsbD, PsbE, PsbF, PsbH, PsbI, PsbJ, PsbK, PsbL, PsbM, PsbT, PsbX, PsbY, PsbZ, Psb30/Ycf12, at least 3 peripheral proteins of the oxygen-evolving complex and a large number of cofactors. It forms dimeric complexes.

It is found in the plastid. Its subcellular location is the chloroplast thylakoid membrane. Involved in the binding and/or turnover of quinones at the Q(B) site of photosystem II (PSII). PSII is a light-driven water plastoquinone oxidoreductase, using light energy to abstract electrons from H(2)O, generating a proton gradient subsequently used for ATP formation. The sequence is that of Photosystem II reaction center protein X from Trieres chinensis (Marine centric diatom).